A 139-amino-acid chain; its full sequence is D-ribose pyranase (139 aa).

His-20 (proton donor) is an active-site residue. Substrate-binding positions include Asp-28, His-106, and 128-130 (YAN).

This sequence belongs to the RbsD / FucU family. RbsD subfamily. In terms of assembly, homodecamer.

It is found in the cytoplasm. The enzyme catalyses beta-D-ribopyranose = beta-D-ribofuranose. It functions in the pathway carbohydrate metabolism; D-ribose degradation; D-ribose 5-phosphate from beta-D-ribopyranose: step 1/2. Catalyzes the interconversion of beta-pyran and beta-furan forms of D-ribose. This chain is D-ribose pyranase, found in Histophilus somni (strain 2336) (Haemophilus somnus).